A 112-amino-acid chain; its full sequence is Large ribosomal subunit protein uL22 (112 aa).

Belongs to the universal ribosomal protein uL22 family. In terms of assembly, part of the 50S ribosomal subunit.

This protein binds specifically to 23S rRNA; its binding is stimulated by other ribosomal proteins, e.g. L4, L17, and L20. It is important during the early stages of 50S assembly. It makes multiple contacts with different domains of the 23S rRNA in the assembled 50S subunit and ribosome. In terms of biological role, the globular domain of the protein is located near the polypeptide exit tunnel on the outside of the subunit, while an extended beta-hairpin is found that lines the wall of the exit tunnel in the center of the 70S ribosome. This is Large ribosomal subunit protein uL22 from Anaplasma phagocytophilum (strain HZ).